A 493-amino-acid polypeptide reads, in one-letter code: Lysine--tRNA ligase (493 aa).

Mg(2+) is bound by residues E404 and E411.

This sequence belongs to the class-II aminoacyl-tRNA synthetase family. Homodimer. It depends on Mg(2+) as a cofactor.

The protein localises to the cytoplasm. The catalysed reaction is tRNA(Lys) + L-lysine + ATP = L-lysyl-tRNA(Lys) + AMP + diphosphate. This Oceanobacillus iheyensis (strain DSM 14371 / CIP 107618 / JCM 11309 / KCTC 3954 / HTE831) protein is Lysine--tRNA ligase.